A 167-amino-acid chain; its full sequence is Ribonuclease P protein subunit p20 (167 aa).

Positions Met1–Val36 are disordered. The segment covering Lys12 to Pro31 has biased composition (basic residues).

As to quaternary structure, interacts with Smn.

Its subcellular location is the nucleus. It is found in the nucleolus. It localises to the cytoplasm. The protein resides in the cytoplasmic granule. Component of ribonuclease P, a protein complex that generates mature tRNA molecules by cleaving their 5'-ends. Also a component of RNase MRP complex, which cleaves pre-rRNA sequences. This chain is Ribonuclease P protein subunit p20, found in Drosophila melanogaster (Fruit fly).